The following is a 272-amino-acid chain: HMP-PP phosphatase (272 aa).

The Nucleophile role is filled by Asp-8. The Mg(2+) site is built by Asp-8, Asp-10, and Asp-212.

This sequence belongs to the HAD-like hydrolase superfamily. Cof family. It depends on Mg(2+) as a cofactor.

The enzyme catalyses 4-amino-2-methyl-5-(diphosphooxymethyl)pyrimidine + H2O = 4-amino-2-methyl-5-(phosphooxymethyl)pyrimidine + phosphate + H(+). In terms of biological role, catalyzes the hydrolysis of 4-amino-2-methyl-5-hydroxymethylpyrimidine pyrophosphate (HMP-PP) to 4-amino-2-methyl-5-hydroxymethylpyrimidine phosphate (HMP-P). The protein is HMP-PP phosphatase of Salmonella schwarzengrund (strain CVM19633).